The primary structure comprises 76 residues: Protein OPG128 (76 aa).

The cysteines at positions 17 and 21 are disulfide-linked.

Belongs to the orthopoxvirus OPG128 family. Interacts with sulfhydryl oxidase OPG072; this interaction involves formation of a transient disulfide-bonded intermediate, allowing disulfide bond transfer. Interacts with OPG088; this interaction involves formation of a transient disulfide-bonded intermediate, allowing disulfide bond transfer.

Late protein which probably participates in disulfide bond formation by functioning as a thiol-disulfide transfer protein between membrane-associated OPG072 and OPG08. The complete pathway for formation of disulfide bonds in intracellular virion membrane proteins sequentially involves oxidation of OPG072, OPG128 and OPG08. In Variola virus (isolate Human/India/Ind3/1967) (VARV), this protein is Protein OPG128 (OPG128).